A 414-amino-acid chain; its full sequence is uncharacterized protein (414 aa).

Disordered regions lie at residues Ser136 to Thr168, Pro297 to Ser333, and Ala346 to Lys414. The span at Pro350 to Ser359 shows a compositional bias: polar residues. Residues Ser399–Lys414 are compositionally biased toward basic and acidic residues.

This is an uncharacterized protein from Homo sapiens (Human).